We begin with the raw amino-acid sequence, 76 residues long: Large ribosomal subunit protein uL29 (76 aa).

It belongs to the universal ribosomal protein uL29 family.

The chain is Large ribosomal subunit protein uL29 from Corynebacterium glutamicum (strain R).